Here is a 206-residue protein sequence, read N- to C-terminus: Small ribosomal subunit protein uS2 (206 aa).

Belongs to the universal ribosomal protein uS2 family.

This chain is Small ribosomal subunit protein uS2, found in Pyrobaculum neutrophilum (strain DSM 2338 / JCM 9278 / NBRC 100436 / V24Sta) (Thermoproteus neutrophilus).